The chain runs to 168 residues: S-ribosylhomocysteine lyase (168 aa).

His-54, His-58, and Cys-128 together coordinate Fe cation.

This sequence belongs to the LuxS family. As to quaternary structure, homodimer. Fe cation is required as a cofactor.

It carries out the reaction S-(5-deoxy-D-ribos-5-yl)-L-homocysteine = (S)-4,5-dihydroxypentane-2,3-dione + L-homocysteine. Functionally, involved in the synthesis of autoinducer 2 (AI-2) which is secreted by bacteria and is used to communicate both the cell density and the metabolic potential of the environment. The regulation of gene expression in response to changes in cell density is called quorum sensing. Catalyzes the transformation of S-ribosylhomocysteine (RHC) to homocysteine (HC) and 4,5-dihydroxy-2,3-pentadione (DPD). The protein is S-ribosylhomocysteine lyase of Actinobacillus succinogenes (strain ATCC 55618 / DSM 22257 / CCUG 43843 / 130Z).